Here is a 137-residue protein sequence, read N- to C-terminus: Small ribosomal subunit protein bS6 (137 aa).

Positions 96 to 137 (ITEASPMAKAKDERDTRRSSEERAPRAEATEEVKESAENTAE) are disordered. Basic and acidic residues predominate over residues 104–137 (KAKDERDTRRSSEERAPRAEATEEVKESAENTAE).

This sequence belongs to the bacterial ribosomal protein bS6 family.

In terms of biological role, binds together with bS18 to 16S ribosomal RNA. This is Small ribosomal subunit protein bS6 from Shewanella piezotolerans (strain WP3 / JCM 13877).